Reading from the N-terminus, the 732-residue chain is Elongation factor 2 (732 aa).

One can recognise a tr-type G domain in the interval 19–230 (ERIRNMGIAA…VSFKDIVELT (212 aa)). Residues 28-35 (AHIDHGKT), 94-98 (DTPGH), and 148-151 (NKVD) each bind GTP. Histidine 597 carries the post-translational modification Diphthamide.

It belongs to the TRAFAC class translation factor GTPase superfamily. Classic translation factor GTPase family. EF-G/EF-2 subfamily.

It localises to the cytoplasm. Functionally, catalyzes the GTP-dependent ribosomal translocation step during translation elongation. During this step, the ribosome changes from the pre-translocational (PRE) to the post-translocational (POST) state as the newly formed A-site-bound peptidyl-tRNA and P-site-bound deacylated tRNA move to the P and E sites, respectively. Catalyzes the coordinated movement of the two tRNA molecules, the mRNA and conformational changes in the ribosome. The chain is Elongation factor 2 from Thermococcus gammatolerans (strain DSM 15229 / JCM 11827 / EJ3).